The sequence spans 423 residues: Putative competence-damage inducible protein (423 aa).

It belongs to the CinA family.

This is Putative competence-damage inducible protein from Streptococcus pyogenes serotype M3 (strain ATCC BAA-595 / MGAS315).